The chain runs to 316 residues: L-lactate dehydrogenase 1 (316 aa).

NAD(+) contacts are provided by V17, D38, K43, and Y69. Substrate is bound by residues R92 and 124–127 (NPVD). NAD(+) is bound by residues 122–124 (VSN) and T147. 152–155 (DTSR) is a binding site for substrate. Catalysis depends on H179, which acts as the Proton acceptor. Residue T234 participates in substrate binding.

Belongs to the LDH/MDH superfamily. LDH family. As to quaternary structure, homotetramer.

The protein resides in the cytoplasm. It carries out the reaction (S)-lactate + NAD(+) = pyruvate + NADH + H(+). Its pathway is fermentation; pyruvate fermentation to lactate; (S)-lactate from pyruvate: step 1/1. Functionally, catalyzes the conversion of lactate to pyruvate. In Bifidobacterium longum subsp. longum (strain ATCC 15707 / DSM 20219 / JCM 1217 / NCTC 11818 / E194b), this protein is L-lactate dehydrogenase 1.